Consider the following 390-residue polypeptide: 3,5-dihydroxyphenylacetyl-CoA synthase (390 aa).

The active site involves Cys-173.

This sequence belongs to the thiolase-like superfamily. Chalcone/stilbene synthases family.

It catalyses the reaction 4 malonyl-CoA + 4 H(+) = (3,5-dihydroxyphenyl)acetyl-CoA + 4 CO2 + 3 CoA + H2O. It participates in antibiotic biosynthesis; vancomycin biosynthesis. Involved in the biosynthesis of the nonproteinogenic amino acid monomer (S)-3,5-dihydroxyphenylglycine (Dpg) responsible of the production of vancomycin and teicoplanin antibiotics. Catalyzes the Claisen condensation of four molecules of malonyl-CoA to yield 3,5-dihydroxyphenylacetyl-CoA (DPA-CoA) and three free coenzyme A (CoA). DpgA requires the presence of the dehydratases DpgB and DpgD to facilitate the aromatization of the DPA-S-DgpA or DPA-S-CoA intermediate. The sequence is that of 3,5-dihydroxyphenylacetyl-CoA synthase from Streptomyces toyocaensis.